Consider the following 808-residue polypeptide: DNA gyrase subunit B (808 aa).

A Toprim domain is found at 429 to 544 (SELFIVEGDS…KGYLYIAQPP (116 aa)). Residues Glu-435, Asp-509, and Asp-511 each coordinate Mg(2+).

It belongs to the type II topoisomerase GyrB family. As to quaternary structure, heterotetramer, composed of two GyrA and two GyrB chains. In the heterotetramer, GyrA contains the active site tyrosine that forms a transient covalent intermediate with DNA, while GyrB binds cofactors and catalyzes ATP hydrolysis. Mg(2+) is required as a cofactor. It depends on Mn(2+) as a cofactor. The cofactor is Ca(2+).

The protein localises to the cytoplasm. It carries out the reaction ATP-dependent breakage, passage and rejoining of double-stranded DNA.. Its function is as follows. A type II topoisomerase that negatively supercoils closed circular double-stranded (ds) DNA in an ATP-dependent manner to modulate DNA topology and maintain chromosomes in an underwound state. Negative supercoiling favors strand separation, and DNA replication, transcription, recombination and repair, all of which involve strand separation. Also able to catalyze the interconversion of other topological isomers of dsDNA rings, including catenanes and knotted rings. Type II topoisomerases break and join 2 DNA strands simultaneously in an ATP-dependent manner. In Rickettsia felis (strain ATCC VR-1525 / URRWXCal2) (Rickettsia azadi), this protein is DNA gyrase subunit B.